Reading from the N-terminus, the 361-residue chain is Mitogen-activated protein kinase 14A (361 aa).

Residues Tyr25–Phe309 enclose the Protein kinase domain. ATP is bound by residues Val31–Val39 and Lys54. Asp151 functions as the Proton acceptor in the catalytic mechanism. A Phosphothreonine; by MAP2K6 modification is found at Thr181. A TXY motif is present at residues Thr181–Tyr183. Tyr183 carries the phosphotyrosine; by MAP2K6 modification.

The protein belongs to the protein kinase superfamily. CMGC Ser/Thr protein kinase family. MAP kinase subfamily. It depends on Mg(2+) as a cofactor. Post-translationally, dually phosphorylated on Thr-181 and Tyr-183, which activates the enzyme. In terms of tissue distribution, exclusively expressed in the ovary.

The protein localises to the cytoplasm. Its subcellular location is the nucleus. The enzyme catalyses L-seryl-[protein] + ATP = O-phospho-L-seryl-[protein] + ADP + H(+). The catalysed reaction is L-threonyl-[protein] + ATP = O-phospho-L-threonyl-[protein] + ADP + H(+). With respect to regulation, activated by threonine and tyrosine phosphorylation by the dual specificity kinase, MKK6. Its function is as follows. Serine/threonine kinase which acts as an essential component of the MAP kinase signal transduction pathway. Mapk14a is one of the four p38 MAPKs which play an important role in the cascades of cellular responses evoked by extracellular stimuli such as pro-inflammatory cytokines or physical stress leading to direct activation of transcription factors. Accordingly, p38 MAPKs phosphorylate a broad range of proteins and it has been estimated that they may have approximately 200 to 300 substrates each. Some of the targets are downstream kinases which are activated through phosphorylation and further phosphorylate additional targets. The polypeptide is Mitogen-activated protein kinase 14A (mapk14a) (Cyprinus carpio (Common carp)).